The sequence spans 211 residues: LexA repressor (211 aa).

Residues 28–48 constitute a DNA-binding region (H-T-H motif); the sequence is VREVGEAVGLSSSSTIHGHIE. Residues serine 132 and lysine 170 each act as for autocatalytic cleavage activity in the active site.

Belongs to the peptidase S24 family. In terms of assembly, homodimer.

The enzyme catalyses Hydrolysis of Ala-|-Gly bond in repressor LexA.. In terms of biological role, represses a number of genes involved in the response to DNA damage (SOS response), including recA and lexA. In the presence of single-stranded DNA, RecA interacts with LexA causing an autocatalytic cleavage which disrupts the DNA-binding part of LexA, leading to derepression of the SOS regulon and eventually DNA repair. The chain is LexA repressor from Leuconostoc citreum (strain KM20).